We begin with the raw amino-acid sequence, 196 residues long: dCTP deaminase (196 aa).

DCTP is bound by residues 113–118, Asp-131, 139–141, Tyr-174, Lys-181, and Gln-185; these read RSSLAR and VLE. Glu-141 (proton donor/acceptor) is an active-site residue.

The protein belongs to the dCTP deaminase family. Homotrimer.

It catalyses the reaction dCTP + H2O + H(+) = dUTP + NH4(+). The protein operates within pyrimidine metabolism; dUMP biosynthesis; dUMP from dCTP (dUTP route): step 1/2. Functionally, catalyzes the deamination of dCTP to dUTP. In Wigglesworthia glossinidia brevipalpis, this protein is dCTP deaminase.